Reading from the N-terminus, the 136-residue chain is Small ribosomal subunit protein uS11 (136 aa).

This sequence belongs to the universal ribosomal protein uS11 family. In terms of assembly, part of the 30S ribosomal subunit. Interacts with proteins S7 and S18. Binds to IF-3.

Its function is as follows. Located on the platform of the 30S subunit, it bridges several disparate RNA helices of the 16S rRNA. Forms part of the Shine-Dalgarno cleft in the 70S ribosome. The protein is Small ribosomal subunit protein uS11 of Leptospira borgpetersenii serovar Hardjo-bovis (strain JB197).